The following is a 389-amino-acid chain: tRNA(Met) cytidine acetate ligase (389 aa).

Residues 8–21, Gly97, Asn153, and Arg176 each bind ATP; that span reads IAEF…HEYL.

This sequence belongs to the TmcAL family.

The protein resides in the cytoplasm. The catalysed reaction is cytidine(34) in elongator tRNA(Met) + acetate + ATP = N(4)-acetylcytidine(34) in elongator tRNA(Met) + AMP + diphosphate. In terms of biological role, catalyzes the formation of N(4)-acetylcytidine (ac(4)C) at the wobble position of elongator tRNA(Met), using acetate and ATP as substrates. First activates an acetate ion to form acetyladenylate (Ac-AMP) and then transfers the acetyl group to tRNA to form ac(4)C34. The sequence is that of tRNA(Met) cytidine acetate ligase from Lactococcus lactis subsp. lactis (strain IL1403) (Streptococcus lactis).